The sequence spans 211 residues: Thiamine-phosphate synthase (211 aa).

Residues 37-41 (QLRIK) and Asn69 contribute to the 4-amino-2-methyl-5-(diphosphooxymethyl)pyrimidine site. Residues Asp70 and Asp89 each contribute to the Mg(2+) site. Ser108 contacts 4-amino-2-methyl-5-(diphosphooxymethyl)pyrimidine. Residue 134–136 (TQT) coordinates 2-[(2R,5Z)-2-carboxy-4-methylthiazol-5(2H)-ylidene]ethyl phosphate. A 4-amino-2-methyl-5-(diphosphooxymethyl)pyrimidine-binding site is contributed by Lys137. 2-[(2R,5Z)-2-carboxy-4-methylthiazol-5(2H)-ylidene]ethyl phosphate is bound by residues Gly166 and 186–187 (VS).

It belongs to the thiamine-phosphate synthase family. Mg(2+) is required as a cofactor.

It catalyses the reaction 2-[(2R,5Z)-2-carboxy-4-methylthiazol-5(2H)-ylidene]ethyl phosphate + 4-amino-2-methyl-5-(diphosphooxymethyl)pyrimidine + 2 H(+) = thiamine phosphate + CO2 + diphosphate. The enzyme catalyses 2-(2-carboxy-4-methylthiazol-5-yl)ethyl phosphate + 4-amino-2-methyl-5-(diphosphooxymethyl)pyrimidine + 2 H(+) = thiamine phosphate + CO2 + diphosphate. The catalysed reaction is 4-methyl-5-(2-phosphooxyethyl)-thiazole + 4-amino-2-methyl-5-(diphosphooxymethyl)pyrimidine + H(+) = thiamine phosphate + diphosphate. The protein operates within cofactor biosynthesis; thiamine diphosphate biosynthesis; thiamine phosphate from 4-amino-2-methyl-5-diphosphomethylpyrimidine and 4-methyl-5-(2-phosphoethyl)-thiazole: step 1/1. Its function is as follows. Condenses 4-methyl-5-(beta-hydroxyethyl)thiazole monophosphate (THZ-P) and 2-methyl-4-amino-5-hydroxymethyl pyrimidine pyrophosphate (HMP-PP) to form thiamine monophosphate (TMP). In Salmonella newport (strain SL254), this protein is Thiamine-phosphate synthase.